A 299-amino-acid polypeptide reads, in one-letter code: Regucalcin (299 aa).

Glu18 serves as a coordination point for a divalent metal cation. Arg101, Asn103, and Glu121 together coordinate substrate. Lys144 carries the N6-succinyllysine modification. Positions 154 and 204 each coordinate a divalent metal cation. Asp204 serves as the catalytic Proton donor/acceptor. N6-succinyllysine is present on residues Lys244 and Lys253.

It belongs to the SMP-30/CGR1 family. Monomer. It depends on Zn(2+) as a cofactor. Mn(2+) serves as cofactor. Requires Ca(2+) as cofactor. Mg(2+) is required as a cofactor. In terms of tissue distribution, mainly present in the liver. Weak expression was found in the brain, lung and kidney.

The protein resides in the cytoplasm. The enzyme catalyses D-glucono-1,5-lactone + H2O = D-gluconate + H(+). Its pathway is cofactor biosynthesis; L-ascorbate biosynthesis via UDP-alpha-D-glucuronate pathway; L-ascorbate from UDP-alpha-D-glucuronate: step 3/4. Gluconolactonase with low activity towards other sugar lactones, including gulonolactone and galactonolactone. Catalyzes a key step in ascorbic acid (vitamin C) biosynthesis. Can also hydrolyze diisopropyl phosphorofluoridate and phenylacetate (in vitro). Calcium-binding protein. Modulates Ca(2+) signaling, and Ca(2+)-dependent cellular processes and enzyme activities. The chain is Regucalcin (Rgn) from Mus musculus (Mouse).